Reading from the N-terminus, the 156-residue chain is Snaclec trimecetin subunit alpha (156 aa).

The first 23 residues, 1-23 (MGRFIFVSFGLLVVFLSLSGTGA), serve as a signal peptide directing secretion. Intrachain disulfides connect cysteine 25/cysteine 36, cysteine 53/cysteine 150, and cysteine 125/cysteine 142. The 120-residue stretch at 32–151 (FRRYCYKPFK…CGERNLFMCK (120 aa)) folds into the C-type lectin domain.

Belongs to the snaclec family. Heterodimer of subunits alpha and beta; disulfide-linked. As to expression, expressed by the venom gland.

Its subcellular location is the secreted. Its function is as follows. Snaclec that induces platelet aggregation in either human platelet rich plasma (PRP) or washed platelet suspensions. It causes aggregation in a dose-dependent manner even in the absence of various platelet agonists such as ADP or von Willebrand factor (vWF). Interestingly, it does not induce aggregation in rabbit PRP. A monoclonal antibody against the platelet GPIb receptor blocks the aggregation induced by trimecetin, suggesting that it acts by binding to GPIb (GP1BA/GP1BB). This is Snaclec trimecetin subunit alpha from Protobothrops mucrosquamatus (Taiwan habu).